Reading from the N-terminus, the 146-residue chain is Protein disulfide-isomerase 5-1 (146 aa).

Positions Met1–Ala25 are cleaved as a signal peptide. The 108-residue stretch at Glu26 to Glu133 folds into the Thioredoxin domain. Residues Cys55 and Cys58 each act as nucleophile in the active site. The cysteines at positions 55 and 58 are disulfide-linked.

This sequence belongs to the protein disulfide isomerase family.

Functionally, acts as a protein-folding catalyst that interacts with nascent polypeptides to catalyze the formation, isomerization, and reduction or oxidation of disulfide bonds. In Arabidopsis thaliana (Mouse-ear cress), this protein is Protein disulfide-isomerase 5-1 (PDIL5-1).